Consider the following 305-residue polypeptide: tRNA pseudouridine synthase B (305 aa).

Asp41 (nucleophile) is an active-site residue.

The protein belongs to the pseudouridine synthase TruB family. Type 1 subfamily.

The catalysed reaction is uridine(55) in tRNA = pseudouridine(55) in tRNA. In terms of biological role, responsible for synthesis of pseudouridine from uracil-55 in the psi GC loop of transfer RNAs. The sequence is that of tRNA pseudouridine synthase B from Prochlorococcus marinus subsp. pastoris (strain CCMP1986 / NIES-2087 / MED4).